Here is a 637-residue protein sequence, read N- to C-terminus: BUD13 homolog (637 aa).

Residues 18-53 are disordered; the sequence is SGTDAGLEGGPEAGRKRRKKRPKPGGAGGKGMRIVD. A Glycyl lysine isopeptide (Lys-Gly) (interchain with G-Cter in SUMO2) cross-link involves residue Lys-65. The interval 104-470 is disordered; it reads LLGGHGEDGH…KKQDQDTTDL (367 aa). Basic and acidic residues predominate over residues 108-119; sequence HGEDGHFHHDDQ. At Thr-131 the chain carries Phosphothreonine. The residue at position 135 (Ser-135) is a Phosphoserine. Phosphothreonine is present on Thr-144. Ser-148 carries the phosphoserine modification. Position 157 is a phosphothreonine (Thr-157). Position 161 is a phosphoserine (Ser-161). Phosphothreonine is present on Thr-170. Residue Ser-174 is modified to Phosphoserine. At Thr-183 the chain carries Phosphothreonine. Position 187 is a phosphoserine (Ser-187). Thr-196 and Thr-209 each carry phosphothreonine. A Phosphoserine modification is found at Ser-213. Thr-222 is modified (phosphothreonine). A phosphoserine mark is found at Ser-226, Ser-238, Ser-259, Ser-264, Ser-272, Ser-284, Ser-285, and Ser-297. Positions 260–275 are enriched in polar residues; it reads LGTSSPRQTHNHSPTA. Residues 295–315 show a composition bias toward basic and acidic residues; that stretch reads HESPDLELHKAKSSKAAERAP. Over residues 318–335 the composition is skewed to polar residues; sequence AASQSGLGPSHPSLSTNS. Phosphoserine is present on residues Ser-341 and Ser-344. Positions 353–362 are enriched in basic and acidic residues; sequence AHFEAKKQLD. Ser-371, Ser-373, Ser-376, Ser-410, and Ser-426 each carry phosphoserine. A compositionally biased stretch (basic residues) spans 430 to 439; it reads RSPRPGKKTA. A compositionally biased stretch (basic and acidic residues) spans 453–465; it reads VQREHQELKKQDQ. A coiled-coil region spans residues 490 to 538; it reads NLKLERLEQRRKAEKDSERDELYAQWGKGLAQSRQQQQNVEDAMKEMQK. Tyr-512 carries the phosphotyrosine modification. Residues 553–595 form a disordered region; it reads LREQEREGDPMANFIKKNKAKENKNKKVKPRYSGPAPPPNRFN. At Ser-585 the chain carries Phosphoserine.

Belongs to the CWC26 family. As to quaternary structure, part of the activated spliceosome B/catalytic step 1 spliceosome, one of the forms of the spliceosome which has a well-formed active site but still cannot catalyze the branching reaction and is composed of at least 52 proteins, the U2, U5 and U6 snRNAs and the pre-mRNA. Component of the minor spliceosome, which splices U12-type introns.

The protein resides in the nucleus. Functionally, involved in pre-mRNA splicing as component of the activated spliceosome. As a component of the minor spliceosome, involved in the splicing of U12-type introns in pre-mRNAs. This is BUD13 homolog (Bud13) from Mus musculus (Mouse).